The sequence spans 161 residues: Type II secretion system protein M (161 aa).

The Cytoplasmic portion of the chain corresponds to 1–16 (MNELRRRWQVMSQRER). Residues 17 to 37 (LMALACGGLVVLCLLYYLIWA) traverse the membrane as a helical segment. Residues 38 to 161 (PWQESVRQWQ…VTRLSLERVL (124 aa)) lie on the Periplasmic side of the membrane.

The protein belongs to the GSP M family. As to quaternary structure, type II secretion system is composed of four main components: the outer membrane complex, the inner membrane complex, the cytoplasmic secretion ATPase and the periplasm-spanning pseudopilus. Forms homodimers. Interacts with OutL/GspL. Interacts with OutE/GspE and OutF/GspF.

The protein localises to the cell inner membrane. Functionally, inner membrane component of the type II secretion system required for the energy-dependent secretion of extracellular factors such as proteases and toxins from the periplasm. Plays a role in the complex assembly and recruits OutL resulting in a stable complex in the inner membrane. Provides thus a link between the energy-providing OutE protein in the cytoplasm and the rest of the T2SS machinery. This is Type II secretion system protein M (outM) from Dickeya chrysanthemi (Pectobacterium chrysanthemi).